A 247-amino-acid polypeptide reads, in one-letter code: Small ribosomal subunit protein uS2 (247 aa).

This sequence belongs to the universal ribosomal protein uS2 family.

This Cupriavidus taiwanensis (strain DSM 17343 / BCRC 17206 / CCUG 44338 / CIP 107171 / LMG 19424 / R1) (Ralstonia taiwanensis (strain LMG 19424)) protein is Small ribosomal subunit protein uS2.